We begin with the raw amino-acid sequence, 122 residues long: Small ribosomal subunit protein uS13 (122 aa).

A compositionally biased stretch (basic residues) spans Gly95 to Thr116. Residues Gly95–Lys122 form a disordered region.

Belongs to the universal ribosomal protein uS13 family. In terms of assembly, part of the 30S ribosomal subunit. Forms a loose heterodimer with protein S19. Forms two bridges to the 50S subunit in the 70S ribosome.

In terms of biological role, located at the top of the head of the 30S subunit, it contacts several helices of the 16S rRNA. In the 70S ribosome it contacts the 23S rRNA (bridge B1a) and protein L5 of the 50S subunit (bridge B1b), connecting the 2 subunits; these bridges are implicated in subunit movement. Contacts the tRNAs in the A and P-sites. This is Small ribosomal subunit protein uS13 from Campylobacter curvus (strain 525.92).